Reading from the N-terminus, the 122-residue chain is MIQMQTYLTIADNTGGKVAQCIKVLGGSKRRYAKIGDIITIVVKQAIPNSSVKKGDVCKAVIVRTSKEVRRKNGTYVRFDDNACVILDANLSPRGKRVFGPVARELRDANFMKVVSLASEVI.

Belongs to the universal ribosomal protein uL14 family. Part of the 50S ribosomal subunit. Forms a cluster with proteins L3 and L19. In the 70S ribosome, L14 and L19 interact and together make contacts with the 16S rRNA in bridges B5 and B8.

Binds to 23S rRNA. Forms part of two intersubunit bridges in the 70S ribosome. The polypeptide is Large ribosomal subunit protein uL14 (Borreliella afzelii (strain PKo) (Borrelia afzelii)).